Consider the following 469-residue polypeptide: Zinc transporter SLC39A7 (469 aa).

Residues 10-30 traverse the membrane as a helical segment; it reads WVAVGLLTWATLGLLVAELGG. Composition is skewed to basic and acidic residues over residues 42–56 and 66–114; these read FHGH…DFHH and HTHE…EHSR. A disordered region spans residues 42-121; that stretch reads FHGHSHRHSH…HSRGGYGESG (80 aa). Histidine 66 is modified (pros-methylhistidine). 3 helical membrane passes run 138-158, 169-189, and 214-234; these read ALGA…LIPV, LQIL…LHLI, and GPIL…LVVE. Residues 242 to 263 show a composition bias toward basic residues; that stretch reads GGHGHSHGHGHAHSHTHGSHGH. Positions 242 to 310 are disordered; it reads GGHGHSHGHG…VRPQNAEEEK (69 aa). A compositionally biased stretch (basic and acidic residues) spans 264-285; it reads GRQECSTKEKQSSEEEEKETRG. Phosphoserine is present on residues serine 275 and serine 276. The next 3 membrane-spanning stretches (helical) occupy residues 386 to 406, 410 to 430, and 448 to 468; these read LTAV…GGAV, IAGG…FIYV, and SLLE…IAHL.

The protein belongs to the ZIP transporter (TC 2.A.5) family. KE4/Catsup subfamily. In terms of assembly, homodimer. Post-translationally, methylation at some His residue by METTL9 leads to reduced zinc-binding. Rapidly phosphorylated by CK2 following Zn(2+) treatment. This phosphorylation is required for efficient cytosolic Zn(2+) release.

The protein resides in the endoplasmic reticulum membrane. The protein localises to the golgi apparatus. It localises to the cis-Golgi network membrane. The enzyme catalyses Zn(2+)(in) = Zn(2+)(out). Functionally, transports Zn(2+) from the endoplasmic reticulum (ER)/Golgi apparatus to the cytosol, playing an essential role in the regulation of cytosolic zinc levels. Acts as a gatekeeper of zinc release from intracellular stores, requiring post-translational activation by phosphorylation, resulting in activation of multiple downstream pathways leading to cell growth and proliferation. Has an essential role in B cell development and is required for proper B cell receptor signaling. Plays an important role in maintaining intestinal epithelial homeostasis and skin dermis development by regulating ER function. Controls cell signaling pathways involved in glucose metabolism in skeletal muscle. Has a protective role against ER stress in different biological contexts. Mediates Zn(2+)-induced ferroptosis. The protein is Zinc transporter SLC39A7 of Pongo abelii (Sumatran orangutan).